The sequence spans 78 residues: Acyl carrier protein (78 aa).

Residues 4-78 (AEIKDKVYDI…QQAIDYIVKK (75 aa)) form the Carrier domain. Ser-39 carries the O-(pantetheine 4'-phosphoryl)serine modification.

Belongs to the acyl carrier protein (ACP) family. 4'-phosphopantetheine is transferred from CoA to a specific serine of apo-ACP by AcpS. This modification is essential for activity because fatty acids are bound in thioester linkage to the sulfhydryl of the prosthetic group.

Its subcellular location is the cytoplasm. The protein operates within lipid metabolism; fatty acid biosynthesis. In terms of biological role, carrier of the growing fatty acid chain in fatty acid biosynthesis. In Chlorobium phaeovibrioides (strain DSM 265 / 1930) (Prosthecochloris vibrioformis (strain DSM 265)), this protein is Acyl carrier protein.